The chain runs to 159 residues: ATP synthase subunit b', chloroplastic (159 aa).

The chain crosses the membrane as a helical span at residues 30 to 47; sequence LMALQFLALTIILNLIYY.

It belongs to the ATPase B chain family. As to quaternary structure, F-type ATPases have 2 components, F(1) - the catalytic core - and F(0) - the membrane proton channel. F(1) has five subunits: alpha(3), beta(3), gamma(1), delta(1), epsilon(1). F(0) has four main subunits: a(1), b(1), b'(1) and c(10-14). The alpha and beta chains form an alternating ring which encloses part of the gamma chain. F(1) is attached to F(0) by a central stalk formed by the gamma and epsilon chains, while a peripheral stalk is formed by the delta, b and b' chains.

The protein localises to the plastid. The protein resides in the chloroplast thylakoid membrane. Functionally, f(1)F(0) ATP synthase produces ATP from ADP in the presence of a proton or sodium gradient. F-type ATPases consist of two structural domains, F(1) containing the extramembraneous catalytic core and F(0) containing the membrane proton channel, linked together by a central stalk and a peripheral stalk. During catalysis, ATP synthesis in the catalytic domain of F(1) is coupled via a rotary mechanism of the central stalk subunits to proton translocation. In terms of biological role, component of the F(0) channel, it forms part of the peripheral stalk, linking F(1) to F(0). The b'-subunit is a diverged and duplicated form of b found in plants and photosynthetic bacteria. This Antithamnion sp. (Red alga) protein is ATP synthase subunit b', chloroplastic.